Consider the following 406-residue polypeptide: Bifunctional protein GlmU (406 aa).

The tract at residues 1–221 is pyrophosphorylase; that stretch reads MFIILAAGHG…EEEATGINSR (221 aa). Residues 5–8, K19, Q68, 73–74, 98–100, G134, E148, N162, and N219 contribute to the UDP-N-acetyl-alpha-D-glucosamine site; these read LAAG, GT, and YGD. D100 lines the Mg(2+) pocket. N219 lines the Mg(2+) pocket. A linker region spans residues 222–242; the sequence is NDLAKAEFYFQENRRKFFTDS. Residues 243 to 406 form an N-acetyltransferase region; sequence GVTLVAPETV…RRKQMVKKIK (164 aa). UDP-N-acetyl-alpha-D-glucosamine is bound at residue K308. H320 acts as the Proton acceptor in catalysis. UDP-N-acetyl-alpha-D-glucosamine-binding residues include Y323 and N334. Acetyl-CoA-binding positions include A337, 343–344, A380, and R397; that span reads NY.

This sequence in the N-terminal section; belongs to the N-acetylglucosamine-1-phosphate uridyltransferase family. It in the C-terminal section; belongs to the transferase hexapeptide repeat family. Homotrimer. It depends on Mg(2+) as a cofactor.

Its subcellular location is the cytoplasm. The enzyme catalyses alpha-D-glucosamine 1-phosphate + acetyl-CoA = N-acetyl-alpha-D-glucosamine 1-phosphate + CoA + H(+). It catalyses the reaction N-acetyl-alpha-D-glucosamine 1-phosphate + UTP + H(+) = UDP-N-acetyl-alpha-D-glucosamine + diphosphate. It functions in the pathway nucleotide-sugar biosynthesis; UDP-N-acetyl-alpha-D-glucosamine biosynthesis; N-acetyl-alpha-D-glucosamine 1-phosphate from alpha-D-glucosamine 6-phosphate (route II): step 2/2. Its pathway is nucleotide-sugar biosynthesis; UDP-N-acetyl-alpha-D-glucosamine biosynthesis; UDP-N-acetyl-alpha-D-glucosamine from N-acetyl-alpha-D-glucosamine 1-phosphate: step 1/1. It participates in bacterial outer membrane biogenesis; LPS lipid A biosynthesis. In terms of biological role, catalyzes the last two sequential reactions in the de novo biosynthetic pathway for UDP-N-acetylglucosamine (UDP-GlcNAc). The C-terminal domain catalyzes the transfer of acetyl group from acetyl coenzyme A to glucosamine-1-phosphate (GlcN-1-P) to produce N-acetylglucosamine-1-phosphate (GlcNAc-1-P), which is converted into UDP-GlcNAc by the transfer of uridine 5-monophosphate (from uridine 5-triphosphate), a reaction catalyzed by the N-terminal domain. This is Bifunctional protein GlmU from Wolbachia sp. subsp. Brugia malayi (strain TRS).